Reading from the N-terminus, the 526-residue chain is Na(+)/H(+) antiporter NhaB (526 aa).

The next 10 membrane-spanning stretches (helical) occupy residues 13 to 33 (FLGQSPDWYKLAILVFLVVNP), 98 to 118 (LLLIFMVAGIYFMKQLLLFVF), 133 to 155 (LAFCFAAALLSAFLDALTVVAVV), 208 to 228 (LLMHAGVGTALGGVMTMVGEP), 244 to 264 (FFLRMAPVTLPVFACGLLVCL), 309 to 329 (ALIGIWLVVALAFHLAEVGLI), 355 to 375 (EALPFTALLTVFFTVVAVIIE), 395 to 415 (LALFYLFNGLLSSVSDNVFVG), 452 to 472 (VATPNGQAAFLFLLTSALAPL), and 481 to 501 (VWMALPYTVVLTLVGLLCVQF).

It belongs to the NhaB Na(+)/H(+) (TC 2.A.34) antiporter family.

It localises to the cell inner membrane. The enzyme catalyses 2 Na(+)(in) + 3 H(+)(out) = 2 Na(+)(out) + 3 H(+)(in). Na(+)/H(+) antiporter that extrudes sodium in exchange for external protons. This Serratia proteamaculans (strain 568) protein is Na(+)/H(+) antiporter NhaB.